An 874-amino-acid polypeptide reads, in one-letter code: Alanine--tRNA ligase (874 aa).

4 residues coordinate Zn(2+): His-562, His-566, Cys-664, and His-668.

Belongs to the class-II aminoacyl-tRNA synthetase family. The cofactor is Zn(2+).

It localises to the cytoplasm. The enzyme catalyses tRNA(Ala) + L-alanine + ATP = L-alanyl-tRNA(Ala) + AMP + diphosphate. Functionally, catalyzes the attachment of alanine to tRNA(Ala) in a two-step reaction: alanine is first activated by ATP to form Ala-AMP and then transferred to the acceptor end of tRNA(Ala). Also edits incorrectly charged Ser-tRNA(Ala) and Gly-tRNA(Ala) via its editing domain. The sequence is that of Alanine--tRNA ligase from Shewanella baltica (strain OS155 / ATCC BAA-1091).